Consider the following 225-residue polypeptide: UPF0758 protein Sfri_3828 (225 aa).

Residues 102-224 (ILTNPDLTRD…IVSFAERGWI (123 aa)) form the MPN domain. 3 residues coordinate Zn(2+): His173, His175, and Asp186. Residues 173–186 (HNHPSGIAEPSQAD) carry the JAMM motif motif.

It belongs to the UPF0758 family.

The polypeptide is UPF0758 protein Sfri_3828 (Shewanella frigidimarina (strain NCIMB 400)).